The sequence spans 341 residues: HTH-type transcriptional repressor PurR (341 aa).

Residues 2 to 56 (ATIKDVAKRANVSTTTVSHVINKTRFVAEETRNAVWAAIKELHYSPSAVARSLKV) enclose the HTH lacI-type domain. Residues 4 to 23 (IKDVAKRANVSTTTVSHVIN) constitute a DNA-binding region (H-T-H motif). A DNA-binding region spans residues 48-56 (SAVARSLKV). Hypoxanthine is bound by residues Y73, R190, T192, F221, and D275.

Homodimer.

It participates in purine metabolism; purine nucleotide biosynthesis [regulation]. Is the main repressor of the genes involved in the de novo synthesis of purine nucleotides, regulating purB, purC, purEK, purF, purHD, purL, purMN and guaBA expression. PurR is allosterically activated to bind its cognate DNA by binding the purine corepressors, hypoxanthine or guanine, thereby effecting transcription repression. The chain is HTH-type transcriptional repressor PurR from Escherichia fergusonii (strain ATCC 35469 / DSM 13698 / CCUG 18766 / IAM 14443 / JCM 21226 / LMG 7866 / NBRC 102419 / NCTC 12128 / CDC 0568-73).